We begin with the raw amino-acid sequence, 512 residues long: Glutamate--tRNA ligase (512 aa).

A 'HIGH' region motif is present at residues 11-21 (PSPTGALHIGG). The short motif at 263 to 267 (KLSKR) is the 'KMSKS' region element. Lys266 contacts ATP.

It belongs to the class-I aminoacyl-tRNA synthetase family. Glutamate--tRNA ligase type 1 subfamily. As to quaternary structure, monomer.

The protein localises to the cytoplasm. It carries out the reaction tRNA(Glu) + L-glutamate + ATP = L-glutamyl-tRNA(Glu) + AMP + diphosphate. Its function is as follows. Catalyzes the attachment of glutamate to tRNA(Glu) in a two-step reaction: glutamate is first activated by ATP to form Glu-AMP and then transferred to the acceptor end of tRNA(Glu). The chain is Glutamate--tRNA ligase from Amoebophilus asiaticus (strain 5a2).